A 115-amino-acid polypeptide reads, in one-letter code: Potassium-transporting ATPase potassium-binding subunit (115 aa).

The next 2 helical transmembrane spans lie at 8-28 and 60-80; these read YFLL…VAFF and SYCT…YGLL.

This sequence belongs to the KdpA family. The system is composed of three essential subunits: KdpA, KdpB and KdpC.

Its subcellular location is the cell membrane. Functionally, part of the high-affinity ATP-driven potassium transport (or Kdp) system, which catalyzes the hydrolysis of ATP coupled with the electrogenic transport of potassium into the cytoplasm. This subunit binds the extracellular potassium ions and delivers the ions to the membrane domain of KdpB through an intramembrane tunnel. This chain is Potassium-transporting ATPase potassium-binding subunit, found in Geobacillus stearothermophilus (Bacillus stearothermophilus).